The chain runs to 703 residues: Peptide transporter CstA (703 aa).

A run of 16 helical transmembrane segments spans residues 6-26 (TKIL…YLAL), 29-49 (GESV…MIGY), 87-107 (VLFG…GPIL), 118-138 (LWIL…VLFI), 162-182 (VAMV…AMVV), 190-210 (PWGL…GIYM), 221-241 (ASII…VIAA), 256-276 (LAIV…WFLL), 282-302 (LSTF…VLVA), 319-339 (GPVF…CGAI), 374-394 (AVAI…YFAI), 463-483 (LMAF…LTAV), 514-534 (GLLA…QGAI), 547-567 (FGVS…TILV), 574-594 (YTWV…YGGI), and 660-680 (AILC…CIGI).

Belongs to the peptide transporter carbon starvation (CstA) (TC 2.A.114) family.

Its subcellular location is the cell inner membrane. Functionally, involved in the uptake of dipeptides and tripeptides. May influence host-pathogen interactions. Involved in motility and agglutination, and has a role in stimulation of dendritic cells. This chain is Peptide transporter CstA, found in Campylobacter jejuni subsp. jejuni serotype O:2 (strain ATCC 700819 / NCTC 11168).